Here is a 276-residue protein sequence, read N- to C-terminus: Ribosomal RNA large subunit methyltransferase E (276 aa).

S-adenosyl-L-methionine contacts are provided by Gly52, Phe54, Asp72, Asp90, and Asp114. Lys154 acts as the Proton acceptor in catalysis. The span at 203-249 shows a compositional bias: low complexity; it reads RAAPTANATPTPTSTSTSTPTSTSTPTSTSTSTPAPTLTQTQTQTPK. The segment at 203–276 is disordered; the sequence is RAAPTANATP…AKTGASRRTR (74 aa). A compositionally biased stretch (basic residues) spans 265-276; that stretch reads AKAKTGASRRTR.

The protein belongs to the class I-like SAM-binding methyltransferase superfamily. RNA methyltransferase RlmE family.

The protein localises to the cytoplasm. The enzyme catalyses uridine(2552) in 23S rRNA + S-adenosyl-L-methionine = 2'-O-methyluridine(2552) in 23S rRNA + S-adenosyl-L-homocysteine + H(+). Its function is as follows. Specifically methylates the uridine in position 2552 of 23S rRNA at the 2'-O position of the ribose in the fully assembled 50S ribosomal subunit. This is Ribosomal RNA large subunit methyltransferase E from Anaeromyxobacter sp. (strain Fw109-5).